Reading from the N-terminus, the 70-residue chain is EICPTFLRVIESLFLDTPSSFEAAMGFFSPDQDMSEAGAQLKKVLDTLPAKARDSIIKLMEKIDKSLLCN.

It belongs to the secretoglobin family. In terms of assembly, antiparallel homodimer; disulfide-linked. Interaction with LMBR1L is controversial. Club cells (nonciliated cells of the surface epithelium of the pulmonary airways).

The protein localises to the secreted. Functionally, binds phosphatidylcholine, phosphatidylinositol, polychlorinated biphenyls (PCB) and weakly progesterone, potent inhibitor of phospholipase A2. The chain is Uteroglobin (SCGB1A1) from Macaca fuscata fuscata (Japanese macaque).